A 259-amino-acid polypeptide reads, in one-letter code: Global transcriptional regulator CodY (259 aa).

The segment at 1–155 (MNLLEKTRKI…GATVVGMEIL (155 aa)) is GAF domain. Positions 203 to 222 (ASKIADRVGITRSVIVNALR) form a DNA-binding region, H-T-H motif. Phosphoserine is present on S215.

The protein belongs to the CodY family.

The protein localises to the cytoplasm. In terms of biological role, DNA-binding global transcriptional regulator which is involved in the adaptive response to starvation and acts by directly or indirectly controlling the expression of numerous genes in response to nutrient availability. During rapid exponential growth, CodY is highly active and represses genes whose products allow adaptation to nutrient depletion. This chain is Global transcriptional regulator CodY, found in Anoxybacillus flavithermus (strain DSM 21510 / WK1).